A 421-amino-acid polypeptide reads, in one-letter code: Gamma-glutamyl phosphate reductase (421 aa).

Belongs to the gamma-glutamyl phosphate reductase family.

The protein localises to the cytoplasm. It catalyses the reaction L-glutamate 5-semialdehyde + phosphate + NADP(+) = L-glutamyl 5-phosphate + NADPH + H(+). It participates in amino-acid biosynthesis; L-proline biosynthesis; L-glutamate 5-semialdehyde from L-glutamate: step 2/2. In terms of biological role, catalyzes the NADPH-dependent reduction of L-glutamate 5-phosphate into L-glutamate 5-semialdehyde and phosphate. The product spontaneously undergoes cyclization to form 1-pyrroline-5-carboxylate. This is Gamma-glutamyl phosphate reductase from Acinetobacter baylyi (strain ATCC 33305 / BD413 / ADP1).